Here is a 119-residue protein sequence, read N- to C-terminus: Toxin ICK-11 (119 aa).

The signal sequence occupies residues 1–19 (MMKLYSLVIIATLAAAAFA). Cystine bridges form between Cys-59–Cys-74, Cys-67–Cys-80, Cys-71–Cys-116, and Cys-73–Cys-87.

It belongs to the neurotoxin 25 family. ICK-8 subfamily. As to expression, expressed by the venom gland.

It localises to the secreted. In terms of biological role, ion channel inhibitor. This is Toxin ICK-11 from Trittame loki (Brush-footed trapdoor spider).